The following is a 188-amino-acid chain: Adenine phosphoribosyltransferase (188 aa).

This sequence belongs to the purine/pyrimidine phosphoribosyltransferase family. Homodimer.

It localises to the cytoplasm. It catalyses the reaction AMP + diphosphate = 5-phospho-alpha-D-ribose 1-diphosphate + adenine. It participates in purine metabolism; AMP biosynthesis via salvage pathway; AMP from adenine: step 1/1. Functionally, catalyzes a salvage reaction resulting in the formation of AMP, that is energically less costly than de novo synthesis. In Burkholderia orbicola (strain MC0-3), this protein is Adenine phosphoribosyltransferase.